The sequence spans 285 residues: Hydrolase in pqqF 5'region (285 aa).

Residues 22-258 (MRVALYQCPP…EALIIGTLDR (237 aa)) enclose the CN hydrolase domain. E60 functions as the Proton acceptor in the catalytic mechanism. K131 acts as the Proton donor in catalysis. The active-site Nucleophile is C165.

The protein belongs to the carbon-nitrogen hydrolase superfamily. NIT1/NIT2 family.

In Pseudomonas protegens (strain DSM 19095 / LMG 27888 / CFBP 6595 / CHA0), this protein is Hydrolase in pqqF 5'region.